We begin with the raw amino-acid sequence, 489 residues long: CUGBP Elav-like family member 1-B (489 aa).

RRM domains lie at 16-99 (IKMF…PADS), 108-188 (RKLF…FADT), and 404-482 (ANLF…LKRS).

Belongs to the CELF/BRUNOL family. In terms of assembly, oligomer. Oligomerization is required for RNA-binding and EDEN-dependent deadenylation. Post-translationally, phosphorylated during oocyte maturation and dephosphorylated following egg activation. Dephosphorylation is calcium dependent and correlates with the increase in the activity of EDEN-dependent deadenylation.

The protein resides in the nucleus. It localises to the cytoplasm. Functionally, RNA-binding protein implicated in the regulation of several post-transcriptional events. May be involved in pre-mRNA alternative splicing, mRNA translation activation and stability. Mediates the rapid and sequence-specific cytoplasmic deadenylation of EDEN-containing maternal mRNAs following fertilization. Binds to AU-rich sequences (AREs) of jun mRNA. Binds to the embryonic deadenylation element (EDEN) motif localized in the 3'-UTR of maternal mRNAs. Binds to RNA containing several repeats of the consensus sequence 5'-UGU-3'. EDEN-dependent deadenylation is enhanced by the presence of an additional cis element composed of three AUU repeats. This chain is CUGBP Elav-like family member 1-B (cugbp1-b), found in Xenopus laevis (African clawed frog).